Consider the following 289-residue polypeptide: Probable endonuclease 4 (289 aa).

The Zn(2+) site is built by histidine 75, histidine 115, glutamate 153, aspartate 187, histidine 190, histidine 224, aspartate 237, histidine 239, and glutamate 269.

It belongs to the AP endonuclease 2 family. The cofactor is Zn(2+).

The enzyme catalyses Endonucleolytic cleavage to 5'-phosphooligonucleotide end-products.. Endonuclease IV plays a role in DNA repair. It cleaves phosphodiester bonds at apurinic or apyrimidinic (AP) sites, generating a 3'-hydroxyl group and a 5'-terminal sugar phosphate. This Chlamydia abortus (strain DSM 27085 / S26/3) (Chlamydophila abortus) protein is Probable endonuclease 4.